A 207-amino-acid polypeptide reads, in one-letter code: MSNFIVGLTGGIASGKSALAAEFEKLGVPVVDADVVARQVVAPGLILDAITNRFGQGILLPDGTLDRQALRKIVFADPTERRALEAITHPAIRTELQRAAKAANHPYAIVAIPLLAEAGARATYPWLDRILVVDVPVALQHARLMQRDGSTSALAGQMIAAQASRAQRLAIADDVVSNEGNTDQLAQQAQRLDATYRAALQTHRIEN.

Positions 5-207 (IVGLTGGIAS…AALQTHRIEN (203 aa)) constitute a DPCK domain. ATP is bound at residue 13 to 18 (ASGKSA).

Belongs to the CoaE family.

Its subcellular location is the cytoplasm. It carries out the reaction 3'-dephospho-CoA + ATP = ADP + CoA + H(+). Its pathway is cofactor biosynthesis; coenzyme A biosynthesis; CoA from (R)-pantothenate: step 5/5. Functionally, catalyzes the phosphorylation of the 3'-hydroxyl group of dephosphocoenzyme A to form coenzyme A. This is Dephospho-CoA kinase from Xanthomonas campestris pv. campestris (strain ATCC 33913 / DSM 3586 / NCPPB 528 / LMG 568 / P 25).